Consider the following 211-residue polypeptide: Ribosomal RNA small subunit methyltransferase G (211 aa).

S-adenosyl-L-methionine is bound by residues Gly73, 126-127 (IE), and Arg142.

The protein belongs to the methyltransferase superfamily. RNA methyltransferase RsmG family.

Its subcellular location is the cytoplasm. It carries out the reaction guanosine(527) in 16S rRNA + S-adenosyl-L-methionine = N(7)-methylguanosine(527) in 16S rRNA + S-adenosyl-L-homocysteine. Its function is as follows. Specifically methylates the N7 position of guanine in position 527 of 16S rRNA. This chain is Ribosomal RNA small subunit methyltransferase G, found in Methylorubrum populi (strain ATCC BAA-705 / NCIMB 13946 / BJ001) (Methylobacterium populi).